The sequence spans 121 residues: MADSFLKKMEKLEAAEDFFKLLEIPYDIKVLRVYRLHILQRFHDYISAGSRDVGTQTEEQLKQYYGSLLEKAYRDFVHSTAQEEKVFKVFKEQQPASPRTEVRFVSLDSLIGGSKLKSKTL.

This sequence belongs to the NifW family. As to quaternary structure, homotrimer; associates with NifD.

In terms of biological role, may protect the nitrogenase Fe-Mo protein from oxidative damage. The protein is Nitrogenase-stabilizing/protective protein NifW of Methylacidiphilum infernorum (isolate V4) (Methylokorus infernorum (strain V4)).